Consider the following 2321-residue polypeptide: Neurogenic locus notch homolog protein 3 (2321 aa).

Positions 1–14 (MGPGARGRRRRRRP) are enriched in basic residues. Positions 1 to 26 (MGPGARGRRRRRRPMSPPPPPPPVRA) are disordered. A signal peptide spans 1-39 (MGPGARGRRRRRRPMSPPPPPPPVRALPLLLLLAGPGAA). The segment covering 15-25 (MSPPPPPPPVR) has biased composition (pro residues). 3 consecutive EGF-like domains span residues 40–77 (APPC…ERCQ), 78–118 (LEDP…PDCS), and 119–156 (LPDP…RSCR). The Extracellular segment spans residues 40-1643 (APPCLDGSPC…LEPPEPSVPL (1604 aa)). 99 disulfides stabilise this stretch: C43/C55, C49/C65, C67/C76, C82/C93, C87/C106, C108/C117, C123/C134, C128/C144, C146/C155, C162/C174, C168/C183, C185/C194, C201/C212, C206/C222, C224/C233, C240/C251, C245/C260, C262/C271, C278/C291, C285/C300, C302/C311, C318/C329, C323/C338, C340/C349, C355/C366, C360/C377, C379/C388, C395/C408, C402/C417, C419/C428, C435/C446, C440/C455, C457/C466, C473/C484, C478/C493, C495/C504, C511/C522, C516/C531, C533/C542, C549/C559, C554/C568, C570/C579, C586/C597, C591/C606, C608/C617, C624/C634, C629/C643, C645/C654, C661/C672, C666/C681, C683/C692, C699/C709, C704/C718, C720/C729, C738/C749, C743/C758, C760/C769, C775/C786, C780/C796, C798/C807, C814/C826, C820/C835, C837/C846, C853/C864, C858/C873, C875/C884, C891/C901, C896/C910, C912/C921, C928/C939, C933/C948, C950/C959, C966/C977, C971/C986, C988/C997, C1004/C1015, C1009/C1022, C1024/C1033, C1040/C1061, C1055/C1070, C1072/C1081, C1088/C1099, C1093/C1108, C1110/C1119, C1126/C1137, C1131/C1146, C1148/C1157, C1164/C1182, C1176/C1191, C1193/C1202, C1209/C1222, C1214/C1232, C1234/C1243, C1250/C1261, C1255/C1275, C1277/C1286, C1293/C1304, C1298/C1313, and C1315/C1324. Positions 158–195 (DVDECRVGEPCRHGGTCLNTPGSFRCQCPAGYTGPLCE) constitute an EGF-like 4; calcium-binding domain. The 38-residue stretch at 197–234 (PAVPCAPSPCRNGGTCRQSGDLTYDCACLPGFEGQNCE) folds into the EGF-like 5 domain. The region spanning 236 to 272 (NVDDCPGHRCLNGGTCVDGVNTYNCQCPPEWTGQFCT) is the EGF-like 6; calcium-binding domain. In terms of domain architecture, EGF-like 7 spans 274–312 (DVDECQLQPNACHNGGTCFNTLGGHSCVCVNGWTGESCS). Residues 314–350 (NIDDCATAVCFHGATCHDRVASFYCACPMGKTGLLCH) enclose the EGF-like 8; calcium-binding domain. Positions 351 to 389 (LDDACVSNPCHEDAICDTNPVNGRAICTCPPGFTGGACD) constitute an EGF-like 9 domain. The 39-residue stretch at 391-429 (DVDECSIGANPCEHLGRCVNTQGSFLCQCGRGYTGPRCE) folds into the EGF-like 10; calcium-binding domain. One can recognise an EGF-like 11; calcium-binding domain in the interval 431–467 (DVNECLSGPCRNQATCLDRIGQFTCICMAGFTGTYCE). The 37-residue stretch at 469–505 (DIDECQSSPCVNGGVCKDRVNGFSCTCPSGFSGSTCQ) folds into the EGF-like 12; calcium-binding domain. Positions 507–543 (DVDECASTPCRNGAKCVDQPDGYECRCAEGFEGTLCD) constitute an EGF-like 13; calcium-binding domain. Positions 545–580 (NVDDCSPDPCHHGRCVDGIASFSCACAPGYTGTRCE) constitute an EGF-like 14; calcium-binding domain. The EGF-like 15; calcium-binding domain occupies 582-618 (QVDECRSQPCRHGGKCLDLVDKYLCRCPSGTTGVNCE). Residues 620-655 (NIDDCASNPCTFGVCRDGINRYDCVCQPGFTGPLCN) form the EGF-like 16; calcium-binding domain. Residues 657 to 693 (EINECASSPCGEGGSCVDGENGFRCLCPPGSLPPLCL) enclose the EGF-like 17; calcium-binding domain. 3 consecutive EGF-like domains span residues 695–730 (PSHP…PRCS), 734–770 (ARDA…RQCE), and 771–808 (LLSP…PRCQ). The EGF-like 21; calcium-binding domain maps to 810–847 (DVDECAGPAPCGPHGICTNLAGSFSCTCHGGYTGPSCD). Residues 849-885 (DINDCDPNPCLNGGSCQDGVGSFSCSCLPGFAGPRCA) enclose the EGF-like 22; calcium-binding domain. The EGF-like 23; calcium-binding domain occupies 887-922 (DVDECLSNPCGPGTCTDHVASFTCTCPPGYGGFHCE). EGF-like domains follow at residues 924 to 960 (DLPD…AHCQ), 962 to 998 (EADP…PQCQ), 1000 to 1034 (LVDW…RLCD), 1036 to 1082 (RSLP…SHCE), and 1084 to 1120 (EVDP…DNCE). Positions 1122–1158 (DVDECASQPCQHGGSCIDLVARYLCSCPPGTLGVLCE) constitute an EGF-like 29; calcium-binding domain. The EGF-like 30; calcium-binding domain occupies 1160–1203 (NEDDCGPGPPLDSGPRCLHNGTCVDLVGGFRCTCPPGYTGLRCE). N-linked (GlcNAc...) asparagine glycosylation occurs at N1179. 4 EGF-like domains span residues 1205–1244 (DINE…PRCQ), 1246–1287 (VLSP…PRCE), 1289–1325 (VARS…PSCR), and 1335–1373 (SNAS…PRCE). N1336 is a glycosylation site (N-linked (GlcNAc...) asparagine). Intrachain disulfides connect C1339–C1350, C1344–C1361, C1363–C1372, C1387–C1410, C1392–C1405, C1401–C1417, C1428–C1451, C1433–C1446, C1442–C1458, C1467–C1493, C1475–C1488, and C1484–C1500. LNR repeat units lie at residues 1387 to 1427 (CPRA…PWRQ), 1428 to 1458 (CEAL…NFDC), and 1467 to 1505 (CNPV…SEVP). N1438 carries an N-linked (GlcNAc...) asparagine glycan. The chain crosses the membrane as a helical span at residues 1644 to 1664 (LPLLVAGAVLLLVILVLGVMV). At 1665-2321 (ARRKREHSTL…EVTPKRQVLA (657 aa)) the chain is on the cytoplasmic side. ANK repeat units follow at residues 1838–1867 (TGET…DTNA), 1871–1901 (SGRT…DLDA), 1905–1934 (DGST…DVNA), 1938–1967 (LGKS…NKDM), and 1971–2000 (KEET…NREI). The tract at residues 2024 to 2120 (LDQPSGPRSP…FGGPPASPGG (97 aa)) is disordered. Low complexity predominate over residues 2039–2053 (LGPLLCPPGAFLPGL). R2174 carries the post-translational modification Omega-N-methylarginine. The tract at residues 2190-2321 (APGPQLLNPG…EVTPKRQVLA (132 aa)) is disordered. Over residues 2269–2289 (STPSPATATGAMATTTGALPA) the composition is skewed to low complexity. The span at 2296–2308 (VPSSLAQAQTQLG) shows a compositional bias: polar residues.

It belongs to the NOTCH family. As to quaternary structure, heterodimer of a C-terminal fragment N(TM) and a N-terminal fragment N(EC) which are probably linked by disulfide bonds. Interacts with MAML1, MAML2 and MAML3 which act as transcriptional coactivators for NOTCH3. Interacts with PSMA1. Interacts with HIF1AN. Post-translationally, synthesized in the endoplasmic reticulum as an inactive form which is proteolytically cleaved by a furin-like convertase in the trans-Golgi network before it reaches the plasma membrane to yield an active, ligand-accessible form. Cleavage results in a C-terminal fragment N(TM) and a N-terminal fragment N(EC). Following ligand binding, it is cleaved by TNF-alpha converting enzyme (TACE) to yield a membrane-associated intermediate fragment called notch extracellular truncation (NEXT). This fragment is then cleaved by presenilin dependent gamma-secretase to release a notch-derived peptide containing the intracellular domain (NICD) from the membrane. In terms of processing, phosphorylated. Hydroxylated by HIF1AN. Ubiquitously expressed in fetal and adult tissues.

The protein resides in the cell membrane. It localises to the nucleus. Functionally, functions as a receptor for membrane-bound ligands Jagged1, Jagged2 and Delta1 to regulate cell-fate determination. Upon ligand activation through the released notch intracellular domain (NICD) it forms a transcriptional activator complex with RBPJ/RBPSUH and activates genes of the enhancer of split locus. Affects the implementation of differentiation, proliferation and apoptotic programs. This chain is Neurogenic locus notch homolog protein 3 (NOTCH3), found in Homo sapiens (Human).